The sequence spans 138 residues: Cellular retinoic acid-binding protein 2 (138 aa).

Positions 21–31 (KALGVNMMMRK) match the Nuclear localization signal motif. Residue Lys-102 forms a Glycyl lysine isopeptide (Lys-Gly) (interchain with G-Cter in SUMO) linkage. 133-135 (RVY) is an all-trans-retinoate binding site.

Belongs to the calycin superfamily. Fatty-acid binding protein (FABP) family. In terms of assembly, interacts with importin alpha. Interacts with RXR and RARA. Post-translationally, sumoylated in response to retinoic acid binding, sumoylation is critical for dissociation from ER and subsequent nuclear translocation. Embryo and skin of adult mouse.

The protein resides in the cytoplasm. It is found in the endoplasmic reticulum. Its subcellular location is the nucleus. Transports retinoic acid to the nucleus. Regulates the access of retinoic acid to the nuclear retinoic acid receptors. This Mus musculus (Mouse) protein is Cellular retinoic acid-binding protein 2 (Crabp2).